A 380-amino-acid chain; its full sequence is 1-deoxy-D-xylulose 5-phosphate reductoisomerase (380 aa).

8 residues coordinate NADPH: Ser10, Gly11, Ser12, Ile13, Gly36, Lys37, Asn38, and Asn120. Position 121 (Lys121) interacts with 1-deoxy-D-xylulose 5-phosphate. Glu122 provides a ligand contact to NADPH. Asp146 contributes to the Mn(2+) binding site. Ser147, Glu148, Ser172, and His195 together coordinate 1-deoxy-D-xylulose 5-phosphate. Glu148 contributes to the Mn(2+) binding site. Position 201 (Gly201) interacts with NADPH. 1-deoxy-D-xylulose 5-phosphate contacts are provided by Ser208, Asn213, Lys214, and Glu217. Glu217 provides a ligand contact to Mn(2+).

The protein belongs to the DXR family. The cofactor is Mg(2+). Mn(2+) serves as cofactor.

It carries out the reaction 2-C-methyl-D-erythritol 4-phosphate + NADP(+) = 1-deoxy-D-xylulose 5-phosphate + NADPH + H(+). Its pathway is isoprenoid biosynthesis; isopentenyl diphosphate biosynthesis via DXP pathway; isopentenyl diphosphate from 1-deoxy-D-xylulose 5-phosphate: step 1/6. Its function is as follows. Catalyzes the NADPH-dependent rearrangement and reduction of 1-deoxy-D-xylulose-5-phosphate (DXP) to 2-C-methyl-D-erythritol 4-phosphate (MEP). The protein is 1-deoxy-D-xylulose 5-phosphate reductoisomerase of Bacillus cereus (strain ATCC 10987 / NRS 248).